A 209-amino-acid polypeptide reads, in one-letter code: Ribosomal RNA large subunit methyltransferase E (209 aa).

G63, W65, D83, D99, and D124 together coordinate S-adenosyl-L-methionine. The active-site Proton acceptor is K164.

The protein belongs to the class I-like SAM-binding methyltransferase superfamily. RNA methyltransferase RlmE family.

It is found in the cytoplasm. The catalysed reaction is uridine(2552) in 23S rRNA + S-adenosyl-L-methionine = 2'-O-methyluridine(2552) in 23S rRNA + S-adenosyl-L-homocysteine + H(+). In terms of biological role, specifically methylates the uridine in position 2552 of 23S rRNA at the 2'-O position of the ribose in the fully assembled 50S ribosomal subunit. This Vibrio vulnificus (strain CMCP6) protein is Ribosomal RNA large subunit methyltransferase E.